Consider the following 241-residue polypeptide: tRNA pseudouridine synthase A (241 aa).

Catalysis depends on D52, which acts as the Nucleophile. Y111 is a substrate binding site.

The protein belongs to the tRNA pseudouridine synthase TruA family. As to quaternary structure, homodimer.

The catalysed reaction is uridine(38/39/40) in tRNA = pseudouridine(38/39/40) in tRNA. Functionally, formation of pseudouridine at positions 38, 39 and 40 in the anticodon stem and loop of transfer RNAs. The protein is tRNA pseudouridine synthase A of Ureaplasma urealyticum serovar 10 (strain ATCC 33699 / Western).